The primary structure comprises 524 residues: Methylmalonyl-CoA carboxyltransferase 12S subunit (524 aa).

The CoA carboxyltransferase N-terminal domain occupies 13-268 (MEGRVEQLAE…NNTEEASFVN (256 aa)). The interval 13 to 506 (MEGRVEQLAE…RRKIASALEM (494 aa)) is carboxyltransferase. One can recognise a CoA carboxyltransferase C-terminal domain in the interval 274–506 (SPNTELRDIV…RRKIASALEM (233 aa)).

In terms of assembly, homohexamer. Transcarboxylase is composed of three subunits: 1.3S, 5S, and 12S. The core of the enzyme is composed of six 12S subunits. On each side of the core there are three pairs of 5S subunits. Each 5S dimer is attached to the core by two 1.3S subunits. Thus the total number of chains is 30 (6 + 12 + 12).

It catalyses the reaction (S)-methylmalonyl-CoA + pyruvate = propanoyl-CoA + oxaloacetate. In terms of biological role, the 12S subunit specifically catalyzes the transfer of the carboxyl group of methylmalonyl CoA to the biotin of the 1.3S subunit forming propanoyl-CoA and carboxylated 1.3S-biotin. This is Methylmalonyl-CoA carboxyltransferase 12S subunit from Propionibacterium freudenreichii subsp. shermanii.